The sequence spans 212 residues: Cytochrome c biogenesis ATP-binding export protein CcmA (212 aa).

In terms of domain architecture, ABC transporter spans 8–212 (LQATALACER…RSIDLAKGSA (205 aa)). 40–47 (GPNGSGKT) is an ATP binding site.

Belongs to the ABC transporter superfamily. CcmA exporter (TC 3.A.1.107) family. As to quaternary structure, the complex is composed of two ATP-binding proteins (CcmA) and two transmembrane proteins (CcmB).

The protein localises to the cell inner membrane. The enzyme catalyses heme b(in) + ATP + H2O = heme b(out) + ADP + phosphate + H(+). In terms of biological role, part of the ABC transporter complex CcmAB involved in the biogenesis of c-type cytochromes; once thought to export heme, this seems not to be the case, but its exact role is uncertain. Responsible for energy coupling to the transport system. This is Cytochrome c biogenesis ATP-binding export protein CcmA from Pseudomonas syringae pv. tomato (strain ATCC BAA-871 / DC3000).